The sequence spans 221 residues: NADH-ubiquinone oxidoreductase chain 6 (221 aa).

5 helical membrane-spanning segments follow: residues 18–38 (FVEY…IYVI), 44–64 (IVSV…LNII), 74–94 (IIVY…LINI), 107–127 (IPLT…MLPY), and 195–215 (IWLI…IVIT).

It belongs to the complex I subunit 6 family.

It localises to the mitochondrion membrane. The enzyme catalyses a ubiquinone + NADH + 5 H(+)(in) = a ubiquinol + NAD(+) + 4 H(+)(out). Functionally, core subunit of the mitochondrial membrane respiratory chain NADH dehydrogenase (Complex I) that is believed to belong to the minimal assembly required for catalysis. Complex I functions in the transfer of electrons from NADH to the respiratory chain. The immediate electron acceptor for the enzyme is believed to be ubiquinone. The protein is NADH-ubiquinone oxidoreductase chain 6 (ND6) of Podospora anserina (strain S / ATCC MYA-4624 / DSM 980 / FGSC 10383) (Pleurage anserina).